Consider the following 213-residue polypeptide: Urease accessory protein UreG (213 aa).

Glycine 17–threonine 24 is a GTP binding site.

Belongs to the SIMIBI class G3E GTPase family. UreG subfamily. Homodimer. UreD, UreF and UreG form a complex that acts as a GTP-hydrolysis-dependent molecular chaperone, activating the urease apoprotein by helping to assemble the nickel containing metallocenter of UreC. The UreE protein probably delivers the nickel.

The protein resides in the cytoplasm. In terms of biological role, facilitates the functional incorporation of the urease nickel metallocenter. This process requires GTP hydrolysis, probably effectuated by UreG. This is Urease accessory protein UreG from Delftia acidovorans (strain DSM 14801 / SPH-1).